The following is a 534-amino-acid chain: Beta-glucosidase 31 (534 aa).

An N-terminal signal peptide occupies residues 1–22 (MAIKLIALVITLCVASWDVAQG). Glutamine 51 is a binding site for a beta-D-glucoside. N-linked (GlcNAc...) asparagine glycosylation is present at asparagine 68. Residues histidine 154 and 199 to 200 (NE) contribute to the a beta-D-glucoside site. Glutamate 200 (proton donor) is an active-site residue. Residues cysteine 219 and cysteine 227 are joined by a disulfide bond. Position 344 (tyrosine 344) interacts with a beta-D-glucoside. A glycan (N-linked (GlcNAc...) asparagine) is linked at asparagine 374. Residue glutamate 417 participates in a beta-D-glucoside binding. Glutamate 417 acts as the Nucleophile in catalysis. N-linked (GlcNAc...) asparagine glycosylation occurs at asparagine 425. A beta-D-glucoside-binding positions include tryptophan 467, 474 to 475 (EW), and phenylalanine 483.

Belongs to the glycosyl hydrolase 1 family.

It catalyses the reaction Hydrolysis of terminal, non-reducing beta-D-glucosyl residues with release of beta-D-glucose.. In Arabidopsis thaliana (Mouse-ear cress), this protein is Beta-glucosidase 31.